The primary structure comprises 358 residues: Protein UL24 (358 aa).

Belongs to the herpesviridae US22 family.

The protein resides in the virion tegument. In Homo sapiens (Human), this protein is Protein UL24 (UL24).